We begin with the raw amino-acid sequence, 170 residues long: Thialysine N-epsilon-acetyltransferase (170 aa).

One can recognise an N-acetyltransferase domain in the interval 4–166 (VMIREAKEGD…FRFEGEAMRE (163 aa)). 27 to 28 (YE) is a substrate binding site. At lysine 29 the chain carries N6-acetyllysine. Residue glutamate 92 participates in substrate binding. Acetyl-CoA contacts are provided by residues 94–96 (IYV), 102–107 (GQGIGS), 133–135 (NKR), and tyrosine 140. Residue tyrosine 140 is the Proton donor of the active site. Position 152 (glutamate 152) interacts with substrate.

It belongs to the acetyltransferase family. As to quaternary structure, homodimer.

Its subcellular location is the cytoplasm. The enzyme catalyses S-(2-aminoethyl)-L-cysteine + acetyl-CoA = S-(2-acetamidoethyl)-L-cysteine + CoA + H(+). The catalysed reaction is an alkane-alpha,omega-diamine + acetyl-CoA = an N-acetylalkane-alpha,omega-diamine + CoA + H(+). Catalyzes the N-acetylation of the amino acid thialysine (S-(2-aminoethyl)-L-cysteine), a L-lysine analog with the 4-methylene group substituted with a sulfur. May also catalyze acetylation of polyamines, such as norspermidine, spermidine or spermine. However, ability to acetylate polyamines is weak, suggesting that it does not act as a diamine acetyltransferase in vivo. The sequence is that of Thialysine N-epsilon-acetyltransferase from Bos taurus (Bovine).